The chain runs to 349 residues: UDP-N-acetylenolpyruvoylglucosamine reductase (349 aa).

The FAD-binding PCMH-type domain occupies 24–197 (FGIAATARFA…VSVTFRLPKQ (174 aa)). Arg173 is a catalytic residue. The Proton donor role is filled by Ser249. Glu345 is a catalytic residue.

The protein belongs to the MurB family. FAD serves as cofactor.

It is found in the cytoplasm. The catalysed reaction is UDP-N-acetyl-alpha-D-muramate + NADP(+) = UDP-N-acetyl-3-O-(1-carboxyvinyl)-alpha-D-glucosamine + NADPH + H(+). It functions in the pathway cell wall biogenesis; peptidoglycan biosynthesis. In terms of biological role, cell wall formation. The protein is UDP-N-acetylenolpyruvoylglucosamine reductase of Burkholderia lata (strain ATCC 17760 / DSM 23089 / LMG 22485 / NCIMB 9086 / R18194 / 383).